Reading from the N-terminus, the 427-residue chain is Enolase (427 aa).

Gln162 provides a ligand contact to (2R)-2-phosphoglycerate. Glu206 (proton donor) is an active-site residue. Positions 243, 286, and 313 each coordinate Mg(2+). Residues Lys338, Arg367, Ser368, and Lys389 each contribute to the (2R)-2-phosphoglycerate site. Lys338 functions as the Proton acceptor in the catalytic mechanism.

Belongs to the enolase family. Mg(2+) serves as cofactor.

The protein resides in the cytoplasm. Its subcellular location is the secreted. It localises to the cell surface. It catalyses the reaction (2R)-2-phosphoglycerate = phosphoenolpyruvate + H2O. The protein operates within carbohydrate degradation; glycolysis; pyruvate from D-glyceraldehyde 3-phosphate: step 4/5. In terms of biological role, catalyzes the reversible conversion of 2-phosphoglycerate (2-PG) into phosphoenolpyruvate (PEP). It is essential for the degradation of carbohydrates via glycolysis. The polypeptide is Enolase (Methanopyrus kandleri (strain AV19 / DSM 6324 / JCM 9639 / NBRC 100938)).